A 206-amino-acid polypeptide reads, in one-letter code: MKGKILFALFLSAGVIACQPASQAAKQQEVKVAKAETKTKKKESKAEKFRKALAAQDKWQKACSNPVQIAPEGVDVAQFIKEMKATIKYPEDGNVVGDWRKGESLALLKKEYKALYGKKGGSKKGNCYACHCGDPRIIACGNIGPSLRGYGNKGIDPKMTYERIYNPWSQVPCSTMFRFGYHGLLTPEEIADIVAYLHDPESPINK.

Residues 1-17 form the signal peptide; that stretch reads MKGKILFALFLSAGVIA. A lipid anchor (N-palmitoyl cysteine) is attached at C18. C18 carries the S-diacylglycerol cysteine lipid modification. A coiled-coil region spans residues 21–58; that stretch reads ASQAAKQQEVKVAKAETKTKKKESKAEKFRKALAAQDK. The 105-residue stretch at 97-201 folds into the Cytochrome c domain; that stretch reads GDWRKGESLA…DIVAYLHDPE (105 aa). Heme c-binding residues include C127, C130, and H131.

The protein localises to the cell membrane. This is an uncharacterized protein from Aquifex aeolicus (strain VF5).